The chain runs to 346 residues: 3-dehydroquinate synthase (346 aa).

NAD(+) contacts are provided by residues 61–66, 95–99, 119–120, K132, and K141; these read DGEAYK, GVIGD, and TT. Residues E174, H233, and H250 each contribute to the Zn(2+) site.

The protein belongs to the sugar phosphate cyclases superfamily. Dehydroquinate synthase family. The cofactor is NAD(+). Requires Co(2+) as cofactor. It depends on Zn(2+) as a cofactor.

It localises to the cytoplasm. The catalysed reaction is 7-phospho-2-dehydro-3-deoxy-D-arabino-heptonate = 3-dehydroquinate + phosphate. The protein operates within metabolic intermediate biosynthesis; chorismate biosynthesis; chorismate from D-erythrose 4-phosphate and phosphoenolpyruvate: step 2/7. Functionally, catalyzes the conversion of 3-deoxy-D-arabino-heptulosonate 7-phosphate (DAHP) to dehydroquinate (DHQ). This is 3-dehydroquinate synthase from Wolinella succinogenes (strain ATCC 29543 / DSM 1740 / CCUG 13145 / JCM 31913 / LMG 7466 / NCTC 11488 / FDC 602W) (Vibrio succinogenes).